A 107-amino-acid polypeptide reads, in one-letter code: Putative protein RFPL3S (107 aa).

Strongly expressed in the testis and weakly in brain, placenta and pancreas.

The polypeptide is Putative protein RFPL3S (RFPL3S) (Homo sapiens (Human)).